Consider the following 340-residue polypeptide: Protein-arginine kinase (340 aa).

One can recognise a Phosphagen kinase C-terminal domain in the interval isoleucine 14–alanine 241. ATP is bound by residues serine 17–arginine 21, arginine 112, arginine 163–methionine 167, and arginine 194–glutamate 199.

It belongs to the ATP:guanido phosphotransferase family.

It carries out the reaction L-arginyl-[protein] + ATP = N(omega)-phospho-L-arginyl-[protein] + ADP + H(+). Functionally, catalyzes the specific phosphorylation of arginine residues in proteins. In Clostridium tetani (strain Massachusetts / E88), this protein is Protein-arginine kinase.